The chain runs to 195 residues: MGYHFYFDREFGRQAVRVNPGGFAIASADVMLATVLGSCVSVCMFDSAARVGGMNHFMLPGSGNGARNDSLSSLYGVNAMELLINGLLRRGALKWRLRAKLFGGGCVMQSLSDTRIGERNAAFVRAYLDAEGIRSVGGDMLGTRPRRVCYFPSTGRALCKRLVRGSDVADIATSERAYDGDLARRLPVAGSVELF.

The protein belongs to the CheD family.

The catalysed reaction is L-glutaminyl-[protein] + H2O = L-glutamyl-[protein] + NH4(+). In terms of biological role, probably deamidates glutamine residues to glutamate on methyl-accepting chemotaxis receptors (MCPs), playing an important role in chemotaxis. The chain is Probable chemoreceptor glutamine deamidase CheD 2 from Burkholderia thailandensis (strain ATCC 700388 / DSM 13276 / CCUG 48851 / CIP 106301 / E264).